The chain runs to 205 residues: Outer-membrane lipoprotein carrier protein (205 aa).

A signal peptide spans 1-19; it reads MKKIIICFIFVFSINISFA.

The protein belongs to the LolA family. In terms of assembly, monomer.

Its subcellular location is the periplasm. Functionally, participates in the translocation of lipoproteins from the inner membrane to the outer membrane. Only forms a complex with a lipoprotein if the residue after the N-terminal Cys is not an aspartate (The Asp acts as a targeting signal to indicate that the lipoprotein should stay in the inner membrane). This Francisella tularensis subsp. novicida (strain U112) protein is Outer-membrane lipoprotein carrier protein.